A 476-amino-acid chain; its full sequence is Membrane-bound lytic murein transglycosylase F (476 aa).

A signal peptide spans 1-16; the sequence is MIKTLFIILLCGILSA. Residues 17-259 are non-LT domain; it reads CQPVDIQDVD…HLNEKYFGHV (243 aa). Positions 260–476 are LT domain; sequence KRFDYVDTRA…VPAKSHVSAQ (217 aa). The active site involves glutamate 304.

This sequence in the N-terminal section; belongs to the bacterial solute-binding protein 3 family. It in the C-terminal section; belongs to the transglycosylase Slt family.

Its subcellular location is the cell outer membrane. It catalyses the reaction Exolytic cleavage of the (1-&gt;4)-beta-glycosidic linkage between N-acetylmuramic acid (MurNAc) and N-acetylglucosamine (GlcNAc) residues in peptidoglycan, from either the reducing or the non-reducing ends of the peptidoglycan chains, with concomitant formation of a 1,6-anhydrobond in the MurNAc residue.. Functionally, murein-degrading enzyme that degrades murein glycan strands and insoluble, high-molecular weight murein sacculi, with the concomitant formation of a 1,6-anhydromuramoyl product. Lytic transglycosylases (LTs) play an integral role in the metabolism of the peptidoglycan (PG) sacculus. Their lytic action creates space within the PG sacculus to allow for its expansion as well as for the insertion of various structures such as secretion systems and flagella. The polypeptide is Membrane-bound lytic murein transglycosylase F (Shewanella frigidimarina (strain NCIMB 400)).